We begin with the raw amino-acid sequence, 726 residues long: MELGKGKLLRSGINALYQAIHPVHGLAWTDGRQVVLTALHLNNEEPKFGNSIVIGQFEHVHGLYWGPFLANDTPALLAVQHKKHVTVWQLCYSPSDKNKLVVSQTCEIGDPFPVLPQGCTWHPSKDILVVLTKRDVSVLYAVRYENSSLKADIKSSGLIHCACWTKDGSRLVVAIGSALHSYIWDSKQKTLNACAFCPVFDIGGYICAIESTVDSQVAVSTELPLDRICALNAGIAFTMPASSEITISNQPGLLLMEEEFSMDGVQKSADSGSLTTDSLATSPATLDLTHIVNHSKADLNSLLNLKKKDYLTGSGQDSSHLILVSFEKKVTTTRRVSIPGILVPDILAFDPTAHIVAVASNTCSAVLVYSLTSSSVPNIQQIQLEKNERPKGLCFLTDKMLLVLVGRQKTSDPAFLPSSSSDKYLIRLMVKEVMFDEDSSASSGGNTSVQASNDSCMSIQDKKKMVESLYKESPSTHRELLLPSGTAPPTYLRKKKLIEEIRSYDGDQSPTSSANEFDEKRNRLRMESFDTEPKNCSVTLSLDMDKKPISGSTSPKSECQNSSPPNFIQPSDVSPQQEILSISRNVERLCCNFAHLQQHLSELTDITRNGKRPLSASYLPCRQAPYVTVVCQDAYHPEGPAMKRSILLCENKLRLGTVQELFGLSLIEMQLGPSLWIILTGDSEGFIPLTFLANQEITIRDARIAAMHPPLRMDRNNSMQPSSSVT.

WD repeat units lie at residues 55–98 and 154–194; these read GQFE…SDKN and KSSG…LNAC. A disordered region spans residues 502–574; it reads RSYDGDQSPT…PNFIQPSDVS (73 aa). A compositionally biased stretch (polar residues) spans 506-515; that stretch reads GDQSPTSSAN. Residues 517–533 are compositionally biased toward basic and acidic residues; the sequence is FDEKRNRLRMESFDTEP. Over residues 550-574 the composition is skewed to polar residues; it reads SGSTSPKSECQNSSPPNFIQPSDVS. The stretch at 581-609 forms a coiled coil; sequence SISRNVERLCCNFAHLQQHLSELTDITRN.

The chain is WD repeat and coiled-coil-containing protein (wdcp) from Xenopus laevis (African clawed frog).